The following is a 1046-amino-acid chain: UDP-N-acetylglucosamine--peptide N-acetylglucosaminyltransferase 110 kDa subunit (1046 aa).

Ala2 is modified (N-acetylalanine). Ser3 and Ser4 each carry phosphoserine; by GSK3-beta; alternate. O-linked (GlcNAc) serine; alternate glycans are attached at residues Ser3 and Ser4. Asp10 is a glycosylation site (O-linked (GlcNAc) serine). The O-linked (GlcNAc) threonine glycan is linked to Thr12. O-linked (GlcNAc) serine glycosylation occurs at Met18. Ser20 carries the post-translational modification Phosphoserine. One copy of the TPR 1 repeat lies at 21 to 54 (FQGLAELAHREYQAGDFEAAERHCMQLWRQEPDN). O-linked (GlcNAc) threonine glycosylation is present at Glu38. O-linked (GlcNAc) serine glycosylation is found at Pro52 and Gly56. 11 TPR repeats span residues 89–122 (AEAY…KPDF), 123–156 (IDGY…NPDL), 157–190 (YCVR…QPNF), 191–224 (AVAW…DPNF), 225–258 (LDAY…SPNH), 259–292 (AVVH…QPHF), 293–326 (PDAY…CPTH), 327–360 (ADSL…FPEF), 361–394 (AAAH…SPTF), 395–428 (ADAY…NPAF), and 429–462 (ADAH…KPDF). A glycan (O-linked (GlcNAc) serine; by autocatalysis) is linked at Ser399. Thr454 carries the post-translational modification Phosphothreonine; by AMPK. The stretch at 463–473 (PDAYCNLAHCL) is one TPR 13; truncated repeat. A DFP motif motif is present at residues 464 to 466 (DAY). The Nuclear localization signal signature appears at 487 to 503 (KKLVSIVADQLEKNRLP). His508 functions as the Proton acceptor in the catalytic mechanism. Residues Gln849, Lys852, 906–908 (APK), 911–914 (HVRR), 930–932 (HTT), and Asp935 each bind UDP. Position 989 is a phosphotyrosine (Tyr989). Positions 991-1010 (KKVRGKVWKQRISSPLFNTK) are required for phosphatidylinositol 3,4,5-triphosphate binding.

It belongs to the glycosyltransferase 41 family. O-GlcNAc transferase subfamily. In terms of assembly, monomer; may exist in different oligomerization states in cells. Homotrimer, oligomerizes via TPR repeats 6 and 7. Trimerization is not necessary for activity in vitro, however it increases affinity for UDP-GlcNAc. Component of a THAP1/THAP3-HCFC1-OGT complex. Component of the NSL complex at least composed of MOF/KAT8, KANSL1, KANSL2, KANSL3, MCRS1, PHF20, OGT1/OGT, WDR5 and HCFC1. Found in a complex with KIF5B, RHOT1, RHOT2 and TRAK1. Found in a complex composed of at least SINHCAF, SIN3A, HDAC1, SAP30, RBBP4, OGT and TET1. Component of a complex composed of KMT2E/MLL5 (isoform 3), OGT (isoform 1) and USP7; the complex stabilizes KMT2E/MLL5, preventing KMT2E/MLL5 ubiquitination and proteasomal-mediated degradation. Interacts (via TPRs 1-6) with SIN3A; the interaction mediates transcriptional repression in parallel with histone deacetylase. Interacts (via TPR 5-6) with TET1, TET2 and TET3. Interacts (via TPR repeats 6 and 7) with ATXN10. Interacts with NSD2. Interacts with PROSER1; this interaction mediates TET2 O-GlcNAcylation and stability by promoting the interaction between OGT and TET2. Interacts with USP7. As to quaternary structure, (Microbial infection) Interacts with human T-cell leukemia virus 1/HTLV-1 protein Tax; this interaction increases Tax interacting partner CREB1 O-GlcNAcylation. In terms of processing, ubiquitinated by the SCF(FBXO31) complex, leading to its proteasomal degradation. Phosphorylation on Ser-3 or Ser-4 by GSK3-beta positively regulates its activity. Phosphorylation at Thr-454 by AMPK promotes nuclear localization. Post-translationally, glycosylated via autocatalysis; O-GlcNAcylation at Ser-399 promotes nuclear localization. In terms of processing, glycosylated via autocatalysis; does not affect the enzyme activity but regulates substrate selectivity. As to expression, highly expressed in pancreas and to a lesser extent in skeletal muscle, heart, brain and placenta. Present in trace amounts in lung and liver.

It localises to the nucleus. Its subcellular location is the cytoplasm. The protein localises to the mitochondrion. It is found in the membrane. The protein resides in the cell membrane. It localises to the mitochondrion membrane. Its subcellular location is the cell projection. It catalyses the reaction L-seryl-[protein] + UDP-N-acetyl-alpha-D-glucosamine = 3-O-(N-acetyl-beta-D-glucosaminyl)-L-seryl-[protein] + UDP + H(+). The catalysed reaction is L-threonyl-[protein] + UDP-N-acetyl-alpha-D-glucosamine = 3-O-(N-acetyl-beta-D-glucosaminyl)-L-threonyl-[protein] + UDP + H(+). It participates in protein modification; protein glycosylation. With respect to regulation, subject to product inhibition by UDP. Catalyzes the transfer of a single N-acetylglucosamine from UDP-GlcNAc to a serine or threonine residue in cytoplasmic and nuclear proteins resulting in their modification with a beta-linked N-acetylglucosamine (O-GlcNAc). Glycosylates a large and diverse number of proteins including histone H2B, AKT1, AMPK, ATG4B, CAPRIN1, EZH2, FNIP1, GSDMD, KRT7, LMNA, LMNB1, LMNB2, RPTOR, HOXA1, PFKL, KMT2E/MLL5, MAPT/TAU, TET2, RBL2, RET, NOD2 and HCFC1. Can regulate their cellular processes via cross-talk between glycosylation and phosphorylation or by affecting proteolytic processing. Involved in insulin resistance in muscle and adipocyte cells via glycosylating insulin signaling components and inhibiting the 'Thr-308' phosphorylation of AKT1, enhancing IRS1 phosphorylation and attenuating insulin signaling. Involved in glycolysis regulation by mediating glycosylation of 6-phosphofructokinase PFKL, inhibiting its activity. Plays a key role in chromatin structure by mediating O-GlcNAcylation of 'Ser-112' of histone H2B: recruited to CpG-rich transcription start sites of active genes via its interaction with TET proteins (TET1, TET2 or TET3). As part of the NSL complex indirectly involved in acetylation of nucleosomal histone H4 on several lysine residues. O-GlcNAcylation of 'Ser-75' of EZH2 increases its stability, and facilitating the formation of H3K27me3 by the PRC2/EED-EZH2 complex. Stabilizes KMT2E/MLL5 by mediating its glycosylation, thereby preventing KMT2E/MLL5 ubiquitination. Regulates circadian oscillation of the clock genes and glucose homeostasis in the liver. Stabilizes clock proteins BMAL1 and CLOCK through O-glycosylation, which prevents their ubiquitination and subsequent degradation. Promotes the CLOCK-BMAL1-mediated transcription of genes in the negative loop of the circadian clock such as PER1/2 and CRY1/2. O-glycosylates HCFC1 and regulates its proteolytic processing and transcriptional activity. Component of a THAP1/THAP3-HCFC1-OGT complex that is required for the regulation of the transcriptional activity of RRM1. Regulates mitochondrial motility in neurons by mediating glycosylation of TRAK1. Promotes autophagy by mediating O-glycosylation of ATG4B. Acts as a regulator of mTORC1 signaling by mediating O-glycosylation of RPTOR and FNIP1: O-GlcNAcylation of RPTOR in response to glucose sufficiency promotes activation of the mTORC1 complex. Functionally, the mitochondrial isoform (mOGT) is cytotoxic and triggers apoptosis in several cell types including INS1, an insulinoma cell line. In terms of biological role, has N-acetylglucosaminyltransferase activity: glycosylates proteins, such as HNRNPU, NEUROD1, NUP62 and PDCD6IP. Displays specific substrate selectivity compared to other isoforms. In Homo sapiens (Human), this protein is UDP-N-acetylglucosamine--peptide N-acetylglucosaminyltransferase 110 kDa subunit.